The sequence spans 456 residues: Histidine--tRNA ligase (456 aa).

Positions 1 to 11 (MTQNENPSAQS) are enriched in polar residues. Residues 1 to 22 (MTQNENPSAQSGAKPEDKARPA) form a disordered region.

Belongs to the class-II aminoacyl-tRNA synthetase family. Homodimer.

It is found in the cytoplasm. It carries out the reaction tRNA(His) + L-histidine + ATP = L-histidyl-tRNA(His) + AMP + diphosphate + H(+). This chain is Histidine--tRNA ligase, found in Cupriavidus pinatubonensis (strain JMP 134 / LMG 1197) (Cupriavidus necator (strain JMP 134)).